The sequence spans 480 residues: Transposase for transposon Tn552 (480 aa).

The H-T-H motif DNA-binding region spans 36-55; it reads LSSISKSKGIALSTLYRWNK. Positions 155–341 constitute an Integrase catalytic domain; it reads ESSRPNEIWQ…TPINRWNSNH (187 aa). The disordered stretch occupies residues 438 to 480; sequence RKHLKQNIASPSTTDLIKEEKSYGYSPQETTKNVKKLKRYRND. The span at 470 to 480 shows a compositional bias: basic residues; the sequence is NVKKLKRYRND.

This is Transposase for transposon Tn552 from Staphylococcus aureus.